The following is a 294-amino-acid chain: NAD kinase (294 aa).

D74 serves as the catalytic Proton acceptor. NAD(+) contacts are provided by residues 74-75, 148-149, H159, R176, D178, and 189-194; these read DG, NE, and TAYSLS.

Belongs to the NAD kinase family. The cofactor is a divalent metal cation.

It is found in the cytoplasm. The catalysed reaction is NAD(+) + ATP = ADP + NADP(+) + H(+). Its function is as follows. Involved in the regulation of the intracellular balance of NAD and NADP, and is a key enzyme in the biosynthesis of NADP. Catalyzes specifically the phosphorylation on 2'-hydroxyl of the adenosine moiety of NAD to yield NADP. This Pseudoalteromonas translucida (strain TAC 125) protein is NAD kinase.